Reading from the N-terminus, the 76-residue chain is Sulfur carrier protein TusA (76 aa).

The active-site Cysteine persulfide intermediate is the cysteine 15.

This sequence belongs to the sulfur carrier protein TusA family. Mostly a monomer, a small portion forms homodimer via intermolecular disulfide bonds. Tightly interacts with DsrEFH.

The protein resides in the cytoplasm. The protein operates within energy metabolism; sulfur metabolism. Functionally, sulfur carrier protein involved in sulfur trafficking for oxidative dissimilatory sulfur metabolism. Component of a sulfur relay system that starts with the sulfur-mobilizing rhodanese-like protein Rhd_2599 (Alvin_2599), which transfers the sulfur from a low-molecular-weight thiol, maybe glutathione, to the TusA protein (Alvin_2600); TusA serves as the sulfur donor for DsrEFH, which persulfurates DsrC; persulfurated DsrC very probably serves as a direct substrate for reverse-acting sulfite reductase, DsrAB. TusA seems to be not exclusively dedicated to sulfur oxidation and may have other important roles in the cell. Might also act as a sulfur mediator required for 2-thiouridine formation of tRNA. This Allochromatium vinosum (strain ATCC 17899 / DSM 180 / NBRC 103801 / NCIMB 10441 / D) (Chromatium vinosum) protein is Sulfur carrier protein TusA.